The following is a 138-amino-acid chain: Nucleoside diphosphate kinase (138 aa).

The ATP site is built by K9, F57, R85, T91, R102, and N112. Catalysis depends on H115, which acts as the Pros-phosphohistidine intermediate.

Belongs to the NDK family. As to quaternary structure, homotetramer. It depends on Mg(2+) as a cofactor.

It localises to the cytoplasm. It carries out the reaction a 2'-deoxyribonucleoside 5'-diphosphate + ATP = a 2'-deoxyribonucleoside 5'-triphosphate + ADP. It catalyses the reaction a ribonucleoside 5'-diphosphate + ATP = a ribonucleoside 5'-triphosphate + ADP. In terms of biological role, major role in the synthesis of nucleoside triphosphates other than ATP. The ATP gamma phosphate is transferred to the NDP beta phosphate via a ping-pong mechanism, using a phosphorylated active-site intermediate. The polypeptide is Nucleoside diphosphate kinase (Deinococcus radiodurans (strain ATCC 13939 / DSM 20539 / JCM 16871 / CCUG 27074 / LMG 4051 / NBRC 15346 / NCIMB 9279 / VKM B-1422 / R1)).